The primary structure comprises 385 residues: 1-deoxy-D-xylulose 5-phosphate reductoisomerase (385 aa).

The NADPH site is built by Thr-11, Gly-12, Ser-13, Ile-14, Gln-39, and Asn-117. Lys-118 is a 1-deoxy-D-xylulose 5-phosphate binding site. Position 119 (Glu-119) interacts with NADPH. Asp-143 is a Mn(2+) binding site. Residues Ser-144, Glu-145, Ser-170, and His-193 each coordinate 1-deoxy-D-xylulose 5-phosphate. Glu-145 is a Mn(2+) binding site. Gly-199 contributes to the NADPH binding site. Positions 206, 211, 212, and 215 each coordinate 1-deoxy-D-xylulose 5-phosphate. Residue Glu-215 participates in Mn(2+) binding.

Belongs to the DXR family. Mg(2+) serves as cofactor. The cofactor is Mn(2+).

It carries out the reaction 2-C-methyl-D-erythritol 4-phosphate + NADP(+) = 1-deoxy-D-xylulose 5-phosphate + NADPH + H(+). It participates in isoprenoid biosynthesis; isopentenyl diphosphate biosynthesis via DXP pathway; isopentenyl diphosphate from 1-deoxy-D-xylulose 5-phosphate: step 1/6. Its function is as follows. Catalyzes the NADPH-dependent rearrangement and reduction of 1-deoxy-D-xylulose-5-phosphate (DXP) to 2-C-methyl-D-erythritol 4-phosphate (MEP). The sequence is that of 1-deoxy-D-xylulose 5-phosphate reductoisomerase from Thermomicrobium roseum (strain ATCC 27502 / DSM 5159 / P-2).